Consider the following 505-residue polypeptide: DNA primase large subunit (505 aa).

The segment at 253–270 (LSHSYTGQDYSTQKNTGK) is interdomain linker. An interacts with PRIM1 region spans residues 266–503 (KNTGKISLDQ…LEMDLEGLEE (238 aa)). [4Fe-4S] cluster-binding residues include cysteine 287, cysteine 367, cysteine 384, and cysteine 424. The interval 300 to 442 (HLRHGGRMQY…NVDDCGFSLN (143 aa)) is RNA:DNA duplex binding. The tract at residues 463–486 (KEISQPETPQHKPSTQKTRDAASA) is disordered. Positions 467–478 (QPETPQHKPSTQ) are enriched in polar residues. Threonine 470 carries the post-translational modification Phosphothreonine.

It belongs to the eukaryotic-type primase large subunit family. In terms of assembly, heterodimer of a catalytic subunit PRIM1 and a regulatory subunit PRIM2, also known as the DNA primase complex. Interacts via (C-terminus) with PRIM1. Component of the alpha DNA polymerase complex (also known as the alpha DNA polymerase-primase complex) consisting of four subunits: the catalytic subunit POLA1, the regulatory subunit POLA2, and the primase complex subunits PRIM1 and PRIM2 respectively. Within the complex, POLA1 directly interacts with PRIM2. [4Fe-4S] cluster serves as cofactor.

Its function is as follows. Regulatory subunit of the DNA primase complex and component of the DNA polymerase alpha complex (also known as the alpha DNA polymerase-primase complex) which play an essential role in the initiation of DNA synthesis. During the S phase of the cell cycle, the DNA polymerase alpha complex (composed of a catalytic subunit POLA1, an accessory subunit POLA2 and two primase subunits, the catalytic subunit PRIM1 and the regulatory subunit PRIM2) is recruited to DNA at the replicative forks via direct interactions with MCM10 and WDHD1. The primase subunit of the polymerase alpha complex initiates DNA synthesis by oligomerising short RNA primers on both leading and lagging strands. These primers are initially extended by the polymerase alpha catalytic subunit and subsequently transferred to polymerase delta and polymerase epsilon for processive synthesis on the lagging and leading strand, respectively. In the primase complex, both subunits are necessary for the initial di-nucleotide formation, but the extension of the primer depends only on the catalytic subunit. Binds RNA:DNA duplex and coordinates the catalytic activities of PRIM1 and POLA2 during primase-to-polymerase switch. The chain is DNA primase large subunit (Prim2) from Mus musculus (Mouse).